The following is a 448-amino-acid chain: Deoxyguanosinetriphosphate triphosphohydrolase-like protein (448 aa).

Residues 67-260 enclose the HD domain; sequence RLTHSLEVSQ…MELADDIAYG (194 aa).

This sequence belongs to the dGTPase family. Type 2 subfamily.

This Aliivibrio fischeri (strain MJ11) (Vibrio fischeri) protein is Deoxyguanosinetriphosphate triphosphohydrolase-like protein.